Reading from the N-terminus, the 92-residue chain is Small ribosomal subunit protein uS19 (92 aa).

It belongs to the universal ribosomal protein uS19 family.

In terms of biological role, protein S19 forms a complex with S13 that binds strongly to the 16S ribosomal RNA. In Methylocella silvestris (strain DSM 15510 / CIP 108128 / LMG 27833 / NCIMB 13906 / BL2), this protein is Small ribosomal subunit protein uS19.